A 313-amino-acid polypeptide reads, in one-letter code: Aspartate carbamoyltransferase catalytic subunit (313 aa).

Arginine 59 and threonine 60 together coordinate carbamoyl phosphate. Lysine 87 provides a ligand contact to L-aspartate. Carbamoyl phosphate contacts are provided by arginine 109, histidine 137, and glutamine 140. L-aspartate contacts are provided by arginine 170 and arginine 224. The carbamoyl phosphate site is built by glycine 265 and proline 266.

Belongs to the aspartate/ornithine carbamoyltransferase superfamily. ATCase family. In terms of assembly, heterododecamer (2C3:3R2) of six catalytic PyrB chains organized as two trimers (C3), and six regulatory PyrI chains organized as three dimers (R2).

It carries out the reaction carbamoyl phosphate + L-aspartate = N-carbamoyl-L-aspartate + phosphate + H(+). It participates in pyrimidine metabolism; UMP biosynthesis via de novo pathway; (S)-dihydroorotate from bicarbonate: step 2/3. Catalyzes the condensation of carbamoyl phosphate and aspartate to form carbamoyl aspartate and inorganic phosphate, the committed step in the de novo pyrimidine nucleotide biosynthesis pathway. The polypeptide is Aspartate carbamoyltransferase catalytic subunit (Sinorhizobium medicae (strain WSM419) (Ensifer medicae)).